The sequence spans 215 residues: uncharacterized protein (215 aa).

2 helical membrane-spanning segments follow: residues V40–L60 and L72–L92.

The protein localises to the mitochondrion membrane. This is an uncharacterized protein from Arabidopsis thaliana (Mouse-ear cress).